The chain runs to 490 residues: ATP synthase subunit beta, chloroplastic (490 aa).

170–177 (GGAGVGKT) is an ATP binding site.

This sequence belongs to the ATPase alpha/beta chains family. F-type ATPases have 2 components, CF(1) - the catalytic core - and CF(0) - the membrane proton channel. CF(1) has five subunits: alpha(3), beta(3), gamma(1), delta(1), epsilon(1). CF(0) has four main subunits: a(1), b(1), b'(1) and c(9-12).

The protein resides in the plastid. The protein localises to the chloroplast thylakoid membrane. The enzyme catalyses ATP + H2O + 4 H(+)(in) = ADP + phosphate + 5 H(+)(out). Produces ATP from ADP in the presence of a proton gradient across the membrane. The catalytic sites are hosted primarily by the beta subunits. This chain is ATP synthase subunit beta, chloroplastic, found in Calystegia sepium (Hedge bindweed).